The chain runs to 61 residues: Large ribosomal subunit protein uL29 (61 aa).

This sequence belongs to the universal ribosomal protein uL29 family.

This chain is Large ribosomal subunit protein uL29, found in Nitratidesulfovibrio vulgaris (strain DSM 19637 / Miyazaki F) (Desulfovibrio vulgaris).